A 325-amino-acid polypeptide reads, in one-letter code: GMP reductase (325 aa).

Cys174 acts as the Thioimidate intermediate in catalysis. NADP(+) is bound at residue 203 to 226 (IIADGGIRTNGDIAKSIRFGANMV).

This sequence belongs to the IMPDH/GMPR family. GuaC type 2 subfamily.

The enzyme catalyses IMP + NH4(+) + NADP(+) = GMP + NADPH + 2 H(+). In terms of biological role, catalyzes the irreversible NADPH-dependent deamination of GMP to IMP. It functions in the conversion of nucleobase, nucleoside and nucleotide derivatives of G to A nucleotides, and in maintaining the intracellular balance of A and G nucleotides. This Latilactobacillus sakei subsp. sakei (strain 23K) (Lactobacillus sakei subsp. sakei) protein is GMP reductase.